We begin with the raw amino-acid sequence, 329 residues long: DNA-directed RNA polymerase subunit alpha (329 aa).

An alpha N-terminal domain (alpha-NTD) region spans residues 1–235; sequence MQGFVEDFLK…QQLEAFVDLR (235 aa). The interval 249–329 is alpha C-terminal domain (alpha-CTD); it reads FEPVLLRPVD…NWPPKSLLED (81 aa).

It belongs to the RNA polymerase alpha chain family. As to quaternary structure, homodimer. The RNAP catalytic core consists of 2 alpha, 1 beta, 1 beta' and 1 omega subunit. When a sigma factor is associated with the core the holoenzyme is formed, which can initiate transcription.

The enzyme catalyses RNA(n) + a ribonucleoside 5'-triphosphate = RNA(n+1) + diphosphate. Its function is as follows. DNA-dependent RNA polymerase catalyzes the transcription of DNA into RNA using the four ribonucleoside triphosphates as substrates. The polypeptide is DNA-directed RNA polymerase subunit alpha (Buchnera aphidicola subsp. Cinara cedri (strain Cc)).